The primary structure comprises 117 residues: Big defensin (117 aa).

A signal peptide spans 1–23; it reads MEKKTAYCLLFLVLLVPYTALGA. A propeptide spanning residues 24–33 is cleaved from the precursor; it reads VLKRAPAKKE. Intrachain disulfides connect cysteine 82–cysteine 112, cysteine 89–cysteine 107, and cysteine 93–cysteine 113.

Belongs to the big defensin family.

It localises to the secreted. Functionally, significantly inhibits the growth of Gram-negative and Gram-positive bacteria and fungi in vitro. The polypeptide is Big defensin (Branchiostoma belcheri (Amphioxus)).